We begin with the raw amino-acid sequence, 313 residues long: Porphobilinogen deaminase (313 aa).

At Cys242 the chain carries S-(dipyrrolylmethanemethyl)cysteine.

Belongs to the HMBS family. In terms of assembly, monomer. Dipyrromethane serves as cofactor.

The catalysed reaction is 4 porphobilinogen + H2O = hydroxymethylbilane + 4 NH4(+). It participates in porphyrin-containing compound metabolism; protoporphyrin-IX biosynthesis; coproporphyrinogen-III from 5-aminolevulinate: step 2/4. Its function is as follows. Tetrapolymerization of the monopyrrole PBG into the hydroxymethylbilane pre-uroporphyrinogen in several discrete steps. The protein is Porphobilinogen deaminase of Yersinia pseudotuberculosis serotype O:3 (strain YPIII).